The following is an 871-amino-acid chain: Speckle targeted PIP5K1A-regulated poly(A) polymerase (871 aa).

Residues 16 to 46 form a Matrin-type zinc finger; sequence FRCCLCHITTANQPSLDAHLGGRKHRHLVEL. One can recognise an RRM domain in the interval 56-128; sequence RSVFVSGFPR…RRLRVRPREQ (73 aa). Ser-205 contributes to the ATP binding site. Asp-216 and Asp-218 together coordinate Mg(2+). UTP contacts are provided by Asp-216 and Asp-218. Residues 252-321 are disordered; the sequence is QALACTPASP…QEDQGDGDQG (70 aa). Over residues 259-269 the composition is skewed to pro residues; the sequence is ASPPDSQPPAS. Residue Asn-392 coordinates ATP. UTP-binding residues include Asn-392, Arg-414, Tyr-432, and His-547. Residues 489 to 547 form the PAP-associated domain; the sequence is LSSLLAQFFSCVSCWDLRGSLLSLREGQALSVAGGLPSNLSEGLRLGPMNLQDPFDLSH. Residues 596–871 are KA1; binds the bulging loops of U6 snRNA but is dispensable for terminal uridylyltransferase activity; that stretch reads SSPSSILSAT…LPQALRNLLK (276 aa). The tract at residues 636 to 684 is disordered; the sequence is GTKRLRSEGGGPGEPPQGGTSKRAKLDGQKKSCEEGPEEQQGCAGEHGE. Over residues 659 to 669 the composition is skewed to basic and acidic residues; it reads AKLDGQKKSCE. Ser-748 is modified (phosphoserine).

It belongs to the DNA polymerase type-B-like family. Associates with the cleavage and polyadenylation specificity factor (CPSF) complex. Interacts with CPSF1 and CPSF3; the interaction is direct. Interacts with PIP5K1A. Mg(2+) serves as cofactor. It depends on Mn(2+) as a cofactor. Post-translationally, phosphorylated by CK1 in the proline-rich (Pro-rich) region.

It is found in the nucleus. It localises to the nucleolus. The protein localises to the nucleus speckle. It carries out the reaction RNA(n) + UTP = RNA(n)-3'-uridine ribonucleotide + diphosphate. It catalyses the reaction RNA(n) + ATP = RNA(n)-3'-adenine ribonucleotide + diphosphate. With respect to regulation, adenylyltransferase activity is specifically phosphatidylinositol 4,5-bisphosphate (PtdIns(4,5)P2). In terms of biological role, poly(A) polymerase that creates the 3'-poly(A) tail of specific pre-mRNAs. Localizes to nuclear speckles together with PIP5K1A and mediates polyadenylation of a select set of mRNAs, such as HMOX1. In addition to polyadenylation, it is also required for the 3'-end cleavage of pre-mRNAs: binds to the 3'UTR of targeted pre-mRNAs and promotes the recruitment and assembly of the CPSF complex on the 3'UTR of pre-mRNAs. In addition to adenylyltransferase activity, also has uridylyltransferase activity. However, the ATP ratio is higher than UTP in cells, suggesting that it functions primarily as a poly(A) polymerase. Acts as a specific terminal uridylyltransferase for U6 snRNA in vitro: responsible for a controlled elongation reaction that results in the restoration of the four 3'-terminal UMP-residues found in newly transcribed U6 snRNA. Not involved in replication-dependent histone mRNA degradation. This is Speckle targeted PIP5K1A-regulated poly(A) polymerase (TUT1) from Bos taurus (Bovine).